The chain runs to 138 residues: Large-conductance mechanosensitive channel (138 aa).

3 consecutive transmembrane segments (helical) span residues 15-35 (VDLA…NSVV), 38-58 (IFMP…MFIQ), and 80-100 (GNFI…FFLV).

It belongs to the MscL family. As to quaternary structure, homopentamer.

The protein localises to the cell inner membrane. Its function is as follows. Channel that opens in response to stretch forces in the membrane lipid bilayer. May participate in the regulation of osmotic pressure changes within the cell. In Bartonella bacilliformis (strain ATCC 35685 / KC583 / Herrer 020/F12,63), this protein is Large-conductance mechanosensitive channel.